A 461-amino-acid polypeptide reads, in one-letter code: Transforming growth factor beta-1-induced transcript 1 protein (461 aa).

N-acetylmethionine is present on Met-1. The disordered stretch occupies residues 1 to 87 (MEDLDALLSD…PFSSSSGVLG (87 aa)). A transcription activation region spans residues 1 to 200 (MEDLDALLSD…GCPSPPGQTS (200 aa)). Residues 1-240 (MEDLDALLSD…CNKPIAGQVV (240 aa)) are interaction with PTK2B/PYK2. Positions 3–15 (DLDALLSDLETTT) match the LD motif 1 motif. At Thr-33 the chain carries Phosphothreonine. At Tyr-38 the chain carries Phosphotyrosine. Residues 44–53 (TGSGESSGTT) show a composition bias toward low complexity. Tyr-60 bears the Phosphotyrosine mark. Ser-68 is subject to Phosphoserine. The interval 83–136 (SGVLGNGLCELDRLLQELNATQFNITDEIMSQFPSSKMAEGEEKEDQSEDKSSP) is interaction with PTK2/FAK1. Residues 92–104 (ELDRLLQELNATQ) carry the LD motif 2 motif. Residues 116 to 154 (PSSKMAEGEEKEDQSEDKSSPTVPPSPFPAPSKPSATSA) are disordered. Positions 137 to 147 (TVPPSPFPAPS) are enriched in pro residues. Phosphoserine occurs at positions 141, 164, and 186. The LD motif 3 motif lies at 157 to 168 (ELDRLMASLSDF). The disordered stretch occupies residues 171-204 (QNHLPASGPPQPPAASPTREGCPSPPGQTSKGSL). A Phosphothreonine modification is found at Thr-188. Ser-194 carries the post-translational modification Phosphoserine. The LD motif 4 motif lies at 203–215 (SLDTMLGLLQSDL). 4 LIM zinc-binding domains span residues 226–285 (GLCG…RFSP), 286–343 (RCGF…QLFA), 344–403 (PRCQ…QRGS), and 404–461 (LCAT…KLFG). Ser-403 is modified (phosphoserine). Thr-407 carries the phosphothreonine modification.

It belongs to the paxillin family. In terms of assembly, homooligomer. Interacts with PPARG. Interacts with TRAF4. Interacts with CRIP2. Interacts with HSPB1. Interacts with ILK. Interacts with LIMS1 and LIMS2. Interacts with NCK2. Interacts with NUDT16L1. Interacts with PAK. Interacts with PTPN12. Interacts with TCF3. Interacts with TCF7L2. Interacts with VCL. Interacts (via LD motif 3) with GIT1. Also interacts with GIT2. Forms a complex with ARHGEF7. Interacts with AR/androgen receptor in a ligand-dependent manner. Interacts with CSK. Interacts with PTK2/FAK1 and PTK2B/PYK2. Interacts with SLC6A3. Interacts with SLC6A4. Interacts with NR3C1. Interacts with SMAD3. Interacts with MAPK15. Interacts with SRC. Interacts with LYN. Interacts with talin. Interacts (via LIM zinc-binding domain 2) with CBLC (via RING-type zinc finger); the interaction is direct and enhances CBLC E3 ubiquitin-protein ligase activity. Interacts with PARVA. Interacts with PXN. Post-translationally, phosphorylated by gonadotropin-releasing hormone-activated SRC. Ubiquitously expressed. Higher expression is detected in lung and spleen. Expression decreases during pregnancy in mammary glands. Expressed in all brain areas, with higher levels in cerebellum, prefrontal cortex and hypothalamus. Expressed in smooth muscle, myoepithelial cells and platelets (at protein level). Preferentially expressed in mesenchymal versus epithelial cells (at protein level).

Its subcellular location is the cell junction. The protein localises to the focal adhesion. It localises to the nucleus matrix. It is found in the cytoplasm. The protein resides in the cytoskeleton. In terms of biological role, functions as a molecular adapter coordinating multiple protein-protein interactions at the focal adhesion complex and in the nucleus. Links various intracellular signaling modules to plasma membrane receptors and regulates the Wnt and TGFB signaling pathways. May also regulate SLC6A3 and SLC6A4 targeting to the plasma membrane hence regulating their activity. In the nucleus, functions as a nuclear receptor coactivator regulating glucocorticoid, androgen, mineralocorticoid and progesterone receptor transcriptional activity. May play a role in the processes of cell growth, proliferation, migration, differentiation and senescence. May have a zinc-dependent DNA-binding activity. This chain is Transforming growth factor beta-1-induced transcript 1 protein (Tgfb1i1), found in Mus musculus (Mouse).